A 122-amino-acid polypeptide reads, in one-letter code: Large ribosomal subunit protein bL12 (122 aa).

Belongs to the bacterial ribosomal protein bL12 family. Homodimer. Part of the ribosomal stalk of the 50S ribosomal subunit. Forms a multimeric L10(L12)X complex, where L10 forms an elongated spine to which 2 to 4 L12 dimers bind in a sequential fashion. Binds GTP-bound translation factors.

In terms of biological role, forms part of the ribosomal stalk which helps the ribosome interact with GTP-bound translation factors. Is thus essential for accurate translation. This Yersinia pseudotuberculosis serotype O:1b (strain IP 31758) protein is Large ribosomal subunit protein bL12.